The following is a 176-amino-acid chain: Ribosome maturation factor RimM (176 aa).

Residues 92–165 (EDEFLYSDLI…RLVVVPPVYA (74 aa)) form the PRC barrel domain.

Belongs to the RimM family. In terms of assembly, binds ribosomal protein uS19.

It localises to the cytoplasm. An accessory protein needed during the final step in the assembly of 30S ribosomal subunit, possibly for assembly of the head region. Essential for efficient processing of 16S rRNA. May be needed both before and after RbfA during the maturation of 16S rRNA. It has affinity for free ribosomal 30S subunits but not for 70S ribosomes. This Paramagnetospirillum magneticum (strain ATCC 700264 / AMB-1) (Magnetospirillum magneticum) protein is Ribosome maturation factor RimM.